Consider the following 173-residue polypeptide: Ribosome maturation factor RimM (173 aa).

Residues 93 to 166 (EDEYLVSDMI…KMLVDTIEGM (74 aa)) enclose the PRC barrel domain.

Belongs to the RimM family. In terms of assembly, binds ribosomal protein uS19.

It is found in the cytoplasm. Functionally, an accessory protein needed during the final step in the assembly of 30S ribosomal subunit, possibly for assembly of the head region. Essential for efficient processing of 16S rRNA. May be needed both before and after RbfA during the maturation of 16S rRNA. It has affinity for free ribosomal 30S subunits but not for 70S ribosomes. This Fusobacterium nucleatum subsp. nucleatum (strain ATCC 25586 / DSM 15643 / BCRC 10681 / CIP 101130 / JCM 8532 / KCTC 2640 / LMG 13131 / VPI 4355) protein is Ribosome maturation factor RimM.